The chain runs to 121 residues: Piercer of microtubule wall 2 protein (121 aa).

A compositionally biased stretch (basic and acidic residues) spans 1 to 10; it reads MTDRNRDKKS. The tract at residues 1-29 is disordered; sequence MTDRNRDKKSTSPSNSDTEMKSEQLPPCV.

The protein belongs to the PIERCE2 family. In terms of assembly, microtubule inner protein component of sperm flagellar doublet microtubules. Interacts with CFAP53, ODAD1 and ODAD3; the interactions link the outer dynein arms docking complex (ODA-DC) to the internal microtubule inner proteins (MIP) in cilium axoneme. In terms of tissue distribution, expressed in airway epithelial cells.

The protein resides in the cytoplasm. The protein localises to the cytoskeleton. It is found in the cilium axoneme. Its subcellular location is the flagellum axoneme. Microtubule inner protein involved in the attachment of outer dynein arms (ODAs) to dynein-decorated doublet microtubules (DMTs) in cilia axoneme, which is required for motile cilia beating. The sequence is that of Piercer of microtubule wall 2 protein from Homo sapiens (Human).